The chain runs to 513 residues: Zinc finger CCCH-type with G patch domain-containing protein (513 aa).

The C3H1-type zinc-finger motif lies at 155–178 (PCSYYLEGECRFDEAKCRFSHGAL). Composition is skewed to acidic residues over residues 252–261 (DQDEDDELSS) and 273–283 (SDEAESDMDDL). Positions 252–283 (DQDEDDELSSEESTSSMRDASSDEAESDMDDL) are disordered. The G-patch domain maps to 312 to 358 (TRGIGSKLMEKMGYIHGTGLGSDGRGIVTPVSAQILPQGRSLDACME). Over residues 477-495 (QVQMQSHKQELATLQAQER) the composition is skewed to polar residues. Residues 477 to 513 (QVQMQSHKQELATLQAQERSLSKEQQTRKSKNKMFEF) are disordered. Residues 496-513 (SLSKEQQTRKSKNKMFEF) are compositionally biased toward basic and acidic residues.

It is found in the nucleus. Transcription repressor. This chain is Zinc finger CCCH-type with G patch domain-containing protein, found in Drosophila simulans (Fruit fly).